We begin with the raw amino-acid sequence, 362 residues long: Phosphoserine aminotransferase (362 aa).

Residue R43 coordinates L-glutamate. Pyridoxal 5'-phosphate-binding positions include 77–78 (AT), W103, T153, D173, and Q196. The residue at position 197 (K197) is an N6-(pyridoxal phosphate)lysine. 238 to 239 (NT) lines the pyridoxal 5'-phosphate pocket.

This sequence belongs to the class-V pyridoxal-phosphate-dependent aminotransferase family. SerC subfamily. Homodimer. The cofactor is pyridoxal 5'-phosphate.

It is found in the cytoplasm. The catalysed reaction is O-phospho-L-serine + 2-oxoglutarate = 3-phosphooxypyruvate + L-glutamate. It carries out the reaction 4-(phosphooxy)-L-threonine + 2-oxoglutarate = (R)-3-hydroxy-2-oxo-4-phosphooxybutanoate + L-glutamate. Its pathway is amino-acid biosynthesis; L-serine biosynthesis; L-serine from 3-phospho-D-glycerate: step 2/3. It participates in cofactor biosynthesis; pyridoxine 5'-phosphate biosynthesis; pyridoxine 5'-phosphate from D-erythrose 4-phosphate: step 3/5. In terms of biological role, catalyzes the reversible conversion of 3-phosphohydroxypyruvate to phosphoserine and of 3-hydroxy-2-oxo-4-phosphonooxybutanoate to phosphohydroxythreonine. The sequence is that of Phosphoserine aminotransferase from Acidithiobacillus ferrooxidans (strain ATCC 23270 / DSM 14882 / CIP 104768 / NCIMB 8455) (Ferrobacillus ferrooxidans (strain ATCC 23270)).